The following is a 178-amino-acid chain: RNA pyrophosphohydrolase (178 aa).

Positions 18-171 constitute a Nudix hydrolase domain; it reads PYRPCVGLMV…KRKVYEQVVA (154 aa). Residues 59–80 carry the Nudix box motif; that stretch reads GGIDKGEDPAQAALRELYEETG.

The protein belongs to the Nudix hydrolase family. RppH subfamily. Requires a divalent metal cation as cofactor.

Accelerates the degradation of transcripts by removing pyrophosphate from the 5'-end of triphosphorylated RNA, leading to a more labile monophosphorylated state that can stimulate subsequent ribonuclease cleavage. The chain is RNA pyrophosphohydrolase from Brucella canis (strain ATCC 23365 / NCTC 10854 / RM-666).